The primary structure comprises 160 residues: Lipoprotein signal peptidase (160 aa).

The next 4 membrane-spanning stretches (helical) occupy residues tryptophan 7 to valine 27, leucine 39 to phenylalanine 59, glycine 62 to tryptophan 82, and glycine 96 to valine 116. Active-site residues include aspartate 117 and aspartate 133. The chain crosses the membrane as a helical span at residues phenylalanine 126–alanine 146.

It belongs to the peptidase A8 family.

The protein localises to the cell inner membrane. The catalysed reaction is Release of signal peptides from bacterial membrane prolipoproteins. Hydrolyzes -Xaa-Yaa-Zaa-|-(S,diacylglyceryl)Cys-, in which Xaa is hydrophobic (preferably Leu), and Yaa (Ala or Ser) and Zaa (Gly or Ala) have small, neutral side chains.. Its pathway is protein modification; lipoprotein biosynthesis (signal peptide cleavage). In terms of biological role, this protein specifically catalyzes the removal of signal peptides from prolipoproteins. The polypeptide is Lipoprotein signal peptidase (Gloeothece citriformis (strain PCC 7424) (Cyanothece sp. (strain PCC 7424))).